The sequence spans 317 residues: WD repeat-containing protein 82 (317 aa).

6 WD repeats span residues Glu21–Thr60, Gly107–Leu146, His148–Phe186, Glu194–Thr233, Pro238–Val278, and Asp282–Leu317.

It belongs to the WD repeat SWD2 family. Component of the SET1 complex, composed at least of the catalytic subunit Set1, wds/WDR5, Wdr82, Rbbp5, ash2, Cfp1/CXXC1, hcf and Dpy-30L1. Interacts with male-specific lethal (MSL) histone acetyltransferase complex at least composed of mof, msl-1, msl-2 and msl-3. Interacts with su(sable).

Its subcellular location is the nucleus. In terms of biological role, component of the SET1 complex that specifically di- and trimethylates 'Lys-4' of histone H3. Together with su(sable), part of a transcription termination checkpoint that promotes transcription termination of aberrant RNAs and their subsequent degradation by the nuclear exosome. This chain is WD repeat-containing protein 82, found in Drosophila melanogaster (Fruit fly).